The primary structure comprises 392 residues: uncharacterized protein (392 aa).

Belongs to the glycosyltransferase group 1 family. Glycosyltransferase 4 subfamily.

This is an uncharacterized protein from Methanocaldococcus jannaschii (strain ATCC 43067 / DSM 2661 / JAL-1 / JCM 10045 / NBRC 100440) (Methanococcus jannaschii).